A 337-amino-acid chain; its full sequence is Anthranilate phosphoribosyltransferase (337 aa).

5-phospho-alpha-D-ribose 1-diphosphate contacts are provided by residues G82, 85–86 (GD), T90, 92–95 (NIST), 110–118 (KHGGRSVSS), and S122. Residue G82 coordinates anthranilate. S94 contacts Mg(2+). An anthranilate-binding site is contributed by R168. Positions 226 and 227 each coordinate Mg(2+).

Belongs to the anthranilate phosphoribosyltransferase family. In terms of assembly, homodimer. Mg(2+) is required as a cofactor.

It catalyses the reaction N-(5-phospho-beta-D-ribosyl)anthranilate + diphosphate = 5-phospho-alpha-D-ribose 1-diphosphate + anthranilate. Its pathway is amino-acid biosynthesis; L-tryptophan biosynthesis; L-tryptophan from chorismate: step 2/5. In terms of biological role, catalyzes the transfer of the phosphoribosyl group of 5-phosphorylribose-1-pyrophosphate (PRPP) to anthranilate to yield N-(5'-phosphoribosyl)-anthranilate (PRA). This Francisella tularensis subsp. tularensis (strain WY96-3418) protein is Anthranilate phosphoribosyltransferase.